Reading from the N-terminus, the 461-residue chain is Chromosomal replication initiator protein DnaA (461 aa).

Residues 1 to 90 (MAVSLWQQCI…RPSARPVAPA (90 aa)) are domain I, interacts with DnaA modulators. A domain II region spans residues 91–124 (PVAAKPVNRQTKAQVGTTSFNTQAEPIINPNHRS). Positions 125–341 (NINPTYQFDN…GALNRVIANA (217 aa)) are domain III, AAA+ region. Positions 169, 171, 172, and 173 each coordinate ATP. Positions 342–461 (NFTGRPITID…YANLIRTLSS (120 aa)) are domain IV, binds dsDNA.

The protein belongs to the DnaA family. Oligomerizes as a right-handed, spiral filament on DNA at oriC.

The protein resides in the cytoplasm. In terms of biological role, plays an essential role in the initiation and regulation of chromosomal replication. ATP-DnaA binds to the origin of replication (oriC) to initiate formation of the DNA replication initiation complex once per cell cycle. Binds the DnaA box (a 9 base pair repeat at the origin) and separates the double-stranded (ds)DNA. Forms a right-handed helical filament on oriC DNA; dsDNA binds to the exterior of the filament while single-stranded (ss)DNA is stabiized in the filament's interior. The ATP-DnaA-oriC complex binds and stabilizes one strand of the AT-rich DNA unwinding element (DUE), permitting loading of DNA polymerase. After initiation quickly degrades to an ADP-DnaA complex that is not apt for DNA replication. Binds acidic phospholipids. This Shewanella frigidimarina (strain NCIMB 400) protein is Chromosomal replication initiator protein DnaA.